The chain runs to 531 residues: NAD(P)H-quinone oxidoreductase chain 4 (531 aa).

14 helical membrane passes run 9-29 (FPWL…IPFF), 41-61 (FALS…INGF), 93-113 (MPLI…AWPV), 117-137 (PKLF…VFAV), 141-161 (LLFF…LAIW), 173-193 (FIIY…AMGF), 217-237 (IFCY…VPLH), 248-268 (TAPV…YALL), 282-302 (FAPL…LTSF), 311-331 (IAYS…SFSS), 337-357 (AMLQ…LVGA), 381-401 (FALW…SGFV), 422-442 (VVMA…LLSM), and 469-489 (VYII…PRLV).

The protein belongs to the complex I subunit 4 family.

Its subcellular location is the cellular thylakoid membrane. It catalyses the reaction a plastoquinone + NADH + (n+1) H(+)(in) = a plastoquinol + NAD(+) + n H(+)(out). The enzyme catalyses a plastoquinone + NADPH + (n+1) H(+)(in) = a plastoquinol + NADP(+) + n H(+)(out). Functionally, NDH-1 shuttles electrons from NAD(P)H, via FMN and iron-sulfur (Fe-S) centers, to quinones in the respiratory chain. The immediate electron acceptor for the enzyme in this species is believed to be plastoquinone. Couples the redox reaction to proton translocation (for every two electrons transferred, four hydrogen ions are translocated across the cytoplasmic membrane), and thus conserves the redox energy in a proton gradient. The sequence is that of NAD(P)H-quinone oxidoreductase chain 4 from Prochlorococcus marinus (strain MIT 9301).